Consider the following 123-residue polypeptide: MSGLLLICSALKRVVLKITAVVCSVFSIRVLILATKIKKTCHECGTHLEIIWEGKFIFCKEDSKNGLQSIKILRRANLVKMKTPLPFPYHHLIRERKHSWKLNSVLCPNQVISLWYKHNRVKG.

A helical membrane pass occupies residues 14–34; it reads VVLKITAVVCSVFSIRVLILA.

Its subcellular location is the membrane. This is an uncharacterized protein from Saccharomyces cerevisiae (strain ATCC 204508 / S288c) (Baker's yeast).